Consider the following 106-residue polypeptide: Nucleoid-associated protein XCV1128 (106 aa).

The tract at residues 81–106 is disordered; the sequence is IDAESKDRMGSATAGMQLPPGMKLPF.

It belongs to the YbaB/EbfC family. As to quaternary structure, homodimer.

The protein localises to the cytoplasm. The protein resides in the nucleoid. Its function is as follows. Binds to DNA and alters its conformation. May be involved in regulation of gene expression, nucleoid organization and DNA protection. The polypeptide is Nucleoid-associated protein XCV1128 (Xanthomonas euvesicatoria pv. vesicatoria (strain 85-10) (Xanthomonas campestris pv. vesicatoria)).